A 309-amino-acid polypeptide reads, in one-letter code: Putative glycosyltransferase 48 (309 aa).

Belongs to the glycosyltransferase group 1 family. Glycosyltransferase 4 subfamily.

The protein is Putative glycosyltransferase 48 (SIFV0048) of Saccharolobus islandicus (Sulfolobus islandicus).